The following is a 283-amino-acid chain: Demethylrebeccamycin-D-glucose O-methyltransferase (283 aa).

S-adenosyl-L-methionine is bound by residues Ser101, Gln106, 129–130, Leu146, and His151; that span reads DA.

The protein belongs to the methyltransferase superfamily. Monomer.

It catalyses the reaction 4'-demethylrebeccamycin + S-adenosyl-L-methionine = rebeccamycin + S-adenosyl-L-homocysteine + H(+). Glycosyl O-methyltransferase that catalyzes the final step in the biosynthesis of rebeccamycin, an indolocarbazole alkaloid that inhibits topoisomerase 1. Has broad substrate specificity and functions as glycosyl O-methyltransferase on a number of rebeccamycin analogs. The polypeptide is Demethylrebeccamycin-D-glucose O-methyltransferase (rebM) (Lentzea aerocolonigenes (Lechevalieria aerocolonigenes)).